Reading from the N-terminus, the 176-residue chain is NAD(P)H-quinone oxidoreductase subunit 6, chloroplastic (176 aa).

5 helical membrane-spanning segments follow: residues 10 to 30 (ILLVFLGSGLILGGLGVVLFT), 32 to 52 (PIYSAFSLGLVFVCISLFYIP), 61 to 81 (AQLLIYVGAVNVLIVFAVMFM), 90 to 112 (FHLWTVGDGITSLVCTSILFSLI), and 152 to 172 (FYLPFELTSIILLVALIGAIA).

The protein belongs to the complex I subunit 6 family. As to quaternary structure, NDH is composed of at least 16 different subunits, 5 of which are encoded in the nucleus.

It is found in the plastid. The protein localises to the chloroplast thylakoid membrane. It catalyses the reaction a plastoquinone + NADH + (n+1) H(+)(in) = a plastoquinol + NAD(+) + n H(+)(out). The catalysed reaction is a plastoquinone + NADPH + (n+1) H(+)(in) = a plastoquinol + NADP(+) + n H(+)(out). NDH shuttles electrons from NAD(P)H:plastoquinone, via FMN and iron-sulfur (Fe-S) centers, to quinones in the photosynthetic chain and possibly in a chloroplast respiratory chain. The immediate electron acceptor for the enzyme in this species is believed to be plastoquinone. Couples the redox reaction to proton translocation, and thus conserves the redox energy in a proton gradient. In Ceratophyllum demersum (Rigid hornwort), this protein is NAD(P)H-quinone oxidoreductase subunit 6, chloroplastic (ndhG).